A 290-amino-acid polypeptide reads, in one-letter code: Nitrogenase iron protein 1 (290 aa).

10 to 17 lines the ATP pocket; that stretch reads GKGGIGKS. Cys98 is a [4Fe-4S] cluster binding site. Arg101 carries the post-translational modification ADP-ribosylarginine; by dinitrogenase reductase ADP-ribosyltransferase. Cys133 lines the [4Fe-4S] cluster pocket.

This sequence belongs to the NifH/BchL/ChlL family. In terms of assembly, homodimer. [4Fe-4S] cluster is required as a cofactor. The reversible ADP-ribosylation of Arg-101 inactivates the nitrogenase reductase and regulates nitrogenase activity.

The enzyme catalyses N2 + 8 reduced [2Fe-2S]-[ferredoxin] + 16 ATP + 16 H2O = H2 + 8 oxidized [2Fe-2S]-[ferredoxin] + 2 NH4(+) + 16 ADP + 16 phosphate + 6 H(+). Nitrogenase holoenzyme is subject to 'conformational protection' by FeSII; under oxidizing conditions FeSII binds to the holoenzyme and reversibly protects it from oxidation. Its function is as follows. The key enzymatic reactions in nitrogen fixation are catalyzed by the nitrogenase complex, which has 2 components: the iron protein (component 2) and a component 1 which is either a molybdenum-iron protein, a vanadium-iron, or an iron-iron protein. The sequence is that of Nitrogenase iron protein 1 (nifH1) from Azotobacter vinelandii.